The chain runs to 79 residues: uncharacterized protein (79 aa).

This sequence belongs to the UPF0440 family.

This is an uncharacterized protein from Methanocella arvoryzae (strain DSM 22066 / NBRC 105507 / MRE50).